The following is a 285-amino-acid chain: Bifunctional protein FolD (285 aa).

Residues 166 to 168 (GAS) and Ile-232 contribute to the NADP(+) site.

It belongs to the tetrahydrofolate dehydrogenase/cyclohydrolase family. In terms of assembly, homodimer.

The enzyme catalyses (6R)-5,10-methylene-5,6,7,8-tetrahydrofolate + NADP(+) = (6R)-5,10-methenyltetrahydrofolate + NADPH. It carries out the reaction (6R)-5,10-methenyltetrahydrofolate + H2O = (6R)-10-formyltetrahydrofolate + H(+). Its pathway is one-carbon metabolism; tetrahydrofolate interconversion. Its function is as follows. Catalyzes the oxidation of 5,10-methylenetetrahydrofolate to 5,10-methenyltetrahydrofolate and then the hydrolysis of 5,10-methenyltetrahydrofolate to 10-formyltetrahydrofolate. The protein is Bifunctional protein FolD of Actinobacillus succinogenes (strain ATCC 55618 / DSM 22257 / CCUG 43843 / 130Z).